The chain runs to 453 residues: Venom prothrombin activator notecarin-D2 (453 aa).

An N-terminal signal peptide occupies residues 1 to 20; sequence MAPQLLLCLILTFLWSLPEA. A propeptide spanning residues 21–40 is cleaved from the precursor; it reads ESNVFLKSKVANRFLQRTKR. Residues 41–86 enclose the Gla domain; it reads SNSLFEEIRPGNIERECIEEKCSKEEAREVFEDNEKTETFWNVYVD. 4-carboxyglutamate is present on residues E46, E47, E54, E56, E59, E60, E65, E66, E69, E72, and E75. C57 and C62 are disulfide-bonded. An EGF-like 1; calcium-binding domain is found at 86 to 122; the sequence is DGDQCSSNPCHYRGTCKDGIGSYTCTCLPNYEGKNCE. Cystine bridges form between C90–C101, C95–C110, C112–C121, C129–C140, C136–C149, C151–C164, C172–C326, C216–C221, C236–C252, C374–C388, and C399–C427. O-linked (Hex...) serine glycosylation is present at S92. Residues 129-164 form the EGF-like 2 domain; sequence CRAFNGNCWHFCKRVQSETQCSCAESYLLGVDGHSC. Positions 182-209 are cleaved as a propeptide — activation peptide; the sequence is REASLPDFVQSQKATVLKKSDNPSPDIR. Residues 210-451 enclose the Peptidase S1 domain; that stretch reads IVNGMDCKLG…FIPWIKKIMS (242 aa). Residue H251 is the Charge relay system of the active site. N254 carries an N-linked (GlcNAc...) asparagine glycan. The active-site Charge relay system is D306. The active-site Charge relay system is the S403.

The protein belongs to the peptidase S1 family. Snake venom subfamily. In terms of assembly, heterodimer of a light chain and a heavy chain; disulfide-linked. Gamma-carboxyglutamate residues are formed by vitamin K dependent carboxylation. These residues are essential for the binding of calcium. In terms of tissue distribution, expressed by the venom gland.

It is found in the secreted. It catalyses the reaction Selective cleavage of Arg-|-Thr and then Arg-|-Ile bonds in prothrombin to form thrombin.. Functionally, snake prothrombin activator that attacks the hemostatic system of prey. This protein is functionally similar to blood coagulation factor Xa. This Notechis scutatus scutatus (Mainland tiger snake) protein is Venom prothrombin activator notecarin-D2.